A 297-amino-acid chain; its full sequence is Endonuclease G, mitochondrial (297 aa).

A mitochondrion-targeting transit peptide spans 1 to 48 (MRALRAGLTLASGAGLGAVVEGWRRRREDARAAPGLLGRLPVLPVAAA). T128 is subject to Phosphothreonine; by GSK3-beta. The active-site Proton acceptor is H141. N172 provides a ligand contact to Mg(2+). Residues 286 to 296 (AGSLKAITAGS) form an essential for deoxyribonuclease activity region. Phosphoserine; by GSK3-beta is present on S288.

The protein belongs to the DNA/RNA non-specific endonuclease family. Homodimer; disulfide-linked. Homodimerization is essential for enzyme activity. Interacts with YWHAG. Requires Mg(2+) as cofactor. GSK3-beta-mediated dual phosphorylations at Thr-128 and Ser-288 is necessary for its interaction with YWHAG and the induction of autophagy.

It is found in the mitochondrion. Functionally, endonuclease that preferentially catalyzes the cleavage of double-stranded 5-hydroxymethylcytosine (5hmC)-modified DNA. The 5hmC-modified nucleotide does not increase the binding affinity, but instead increases the efficiency of cutting and specifies the site of cleavage for the modified DNAs. Shows significantly higher affinity for four-stranded Holliday junction over duplex and single-stranded DNAs. Promotes conservative recombination when the DNA is 5hmC-modified. Promotes autophagy through the suppression of mTOR by its phosphorylation-mediated interaction with YWHAG and its endonuclease activity-mediated DNA damage response. GSK3-beta mediated phosphorylation of ENDOG enhances its interaction with YWHAG, leading to the release of TSC2 and PIK3C3 from YWHAG resulting in mTOR pathway suppression and autophagy initiation. Promotes cleavage of mtDNA in response to oxidative and nitrosative stress, in turn inducing compensatory mtDNA replication. This chain is Endonuclease G, mitochondrial (ENDOG), found in Homo sapiens (Human).